Consider the following 248-residue polypeptide: CKLF-like MARVEL transmembrane domain-containing protein 2 (248 aa).

The segment at 1-63 (MAPKAAKGAK…KAVQPKHEVG (63 aa)) is disordered. Residues 12 to 22 (EPAPAPPPPGA) are compositionally biased toward pro residues. Residues 23 to 63 (KPEEDKKDGKEPSDKPQKAVQDHKEPSDKPQKAVQPKHEVG) show a composition bias toward basic and acidic residues. Residues 82–204 (FWLLGHAEIK…DVCLQRNHFR (123 aa)) enclose the MARVEL domain. 3 consecutive transmembrane segments (helical) span residues 116–136 (LIIT…SFAI), 147–167 (ISDL…VVFA), and 178–198 (YLLA…DVCL). The tract at residues 208-248 (AKKHMLVPPPGKEKGPQQGKGPEPAKPPEPGKPPGPAKGKK) is disordered. The segment covering 231–248 (PAKPPEPGKPPGPAKGKK) has biased composition (pro residues).

Belongs to the chemokine-like factor family. As to expression, highly expressed in testis.

It is found in the membrane. This Homo sapiens (Human) protein is CKLF-like MARVEL transmembrane domain-containing protein 2 (CMTM2).